The primary structure comprises 411 residues: Peptidase T (411 aa).

His-78 serves as a coordination point for Zn(2+). Asp-80 is an active-site residue. Asp-140 serves as a coordination point for Zn(2+). Glu-173 functions as the Proton acceptor in the catalytic mechanism. Zn(2+) is bound by residues Glu-174, Asp-196, and His-379.

This sequence belongs to the peptidase M20B family. It depends on Zn(2+) as a cofactor.

Its subcellular location is the cytoplasm. It catalyses the reaction Release of the N-terminal residue from a tripeptide.. In terms of biological role, cleaves the N-terminal amino acid of tripeptides. The protein is Peptidase T of Yersinia pseudotuberculosis serotype O:3 (strain YPIII).